We begin with the raw amino-acid sequence, 575 residues long: Phosphoenolpyruvate-protein phosphotransferase (575 aa).

At Y122 the chain carries Phosphotyrosine. Residue H189 is the Tele-phosphohistidine intermediate of the active site. Residues R296 and R332 each contribute to the phosphoenolpyruvate site. Mg(2+)-binding residues include E431 and D455. Phosphoenolpyruvate contacts are provided by residues 454–455 (ND) and R465. Residue C502 is the Proton donor of the active site.

This sequence belongs to the PEP-utilizing enzyme family. Homodimer. Interacts with the pole-localizer protein TmaR. Binding to TmaR is reversible as long as TmaR can get phosphorylated, whereas binding to non-phosphorylated TmaR is very strong and shifts the equilibrium toward binding. Mg(2+) serves as cofactor. Post-translationally, phosphorylated on Tyr-122. Phosphorylation on Tyr-122 is important for polar localization but not for interaction with TmaR and for activity.

Its subcellular location is the cytoplasm. The enzyme catalyses L-histidyl-[protein] + phosphoenolpyruvate = N(pros)-phospho-L-histidyl-[protein] + pyruvate. Its activity is regulated as follows. Inhibited by oxalate. General (non sugar-specific) component of the phosphoenolpyruvate-dependent sugar phosphotransferase system (sugar PTS). This major carbohydrate active-transport system catalyzes the phosphorylation of incoming sugar substrates concomitantly with their translocation across the cell membrane. Enzyme I transfers the phosphoryl group from phosphoenolpyruvate (PEP) to the phosphoryl carrier protein (HPr). Can also use (Z)-3-fluoro-PEP (ZFPEP), (Z)-3-methyl-PEP (ZMePEP), (Z)-3-chloro-PEP (ZClPEP) and (E)-3-chloro-PEP (EClPEP) as alternative phosphoryl donors. The chain is Phosphoenolpyruvate-protein phosphotransferase from Escherichia coli (strain K12).